The primary structure comprises 106 residues: Large ribosomal subunit protein uL24 (106 aa).

Belongs to the universal ribosomal protein uL24 family. Part of the 50S ribosomal subunit.

Functionally, one of two assembly initiator proteins, it binds directly to the 5'-end of the 23S rRNA, where it nucleates assembly of the 50S subunit. In terms of biological role, one of the proteins that surrounds the polypeptide exit tunnel on the outside of the subunit. In Marinobacter nauticus (strain ATCC 700491 / DSM 11845 / VT8) (Marinobacter aquaeolei), this protein is Large ribosomal subunit protein uL24.